A 255-amino-acid polypeptide reads, in one-letter code: Small ribosomal subunit protein uS2 (255 aa).

The segment at 233-255 is disordered; it reads DFVAEEAASEESLEELAEIVEGK.

It belongs to the universal ribosomal protein uS2 family.

The chain is Small ribosomal subunit protein uS2 (rpsB) from Lactococcus lactis subsp. lactis (strain IL1403) (Streptococcus lactis).